The primary structure comprises 642 residues: uncharacterized protein (642 aa).

Mg(2+) contacts are provided by Glu-15 and Asp-118. The PINc domain maps to Val-29–Glu-149. Residues Asp-510–Thr-578 enclose the KH domain.

The protein in the N-terminal section; belongs to the PINc/VapC protein family. Mg(2+) is required as a cofactor.

This is an uncharacterized protein from Methanocaldococcus jannaschii (strain ATCC 43067 / DSM 2661 / JAL-1 / JCM 10045 / NBRC 100440) (Methanococcus jannaschii).